Reading from the N-terminus, the 302-residue chain is Glycine--tRNA ligase alpha subunit (302 aa).

The protein belongs to the class-II aminoacyl-tRNA synthetase family. Tetramer of two alpha and two beta subunits.

The protein resides in the cytoplasm. The catalysed reaction is tRNA(Gly) + glycine + ATP = glycyl-tRNA(Gly) + AMP + diphosphate. This Wigglesworthia glossinidia brevipalpis protein is Glycine--tRNA ligase alpha subunit.